Reading from the N-terminus, the 596-residue chain is Elongation factor 4 (596 aa).

The 183-residue stretch at 2 to 184 (KHIRNFSIIA…VIVAKIPPPE (183 aa)) folds into the tr-type G domain. GTP is bound by residues 14–19 (DHGKST) and 131–134 (NKID).

This sequence belongs to the TRAFAC class translation factor GTPase superfamily. Classic translation factor GTPase family. LepA subfamily.

The protein resides in the cell inner membrane. The enzyme catalyses GTP + H2O = GDP + phosphate + H(+). Functionally, required for accurate and efficient protein synthesis under certain stress conditions. May act as a fidelity factor of the translation reaction, by catalyzing a one-codon backward translocation of tRNAs on improperly translocated ribosomes. Back-translocation proceeds from a post-translocation (POST) complex to a pre-translocation (PRE) complex, thus giving elongation factor G a second chance to translocate the tRNAs correctly. Binds to ribosomes in a GTP-dependent manner. This is Elongation factor 4 from Shewanella sp. (strain W3-18-1).